Consider the following 165-residue polypeptide: Sporulation-specific cell division protein SsgB (165 aa).

A disordered region spans residues 1–21 (MLVGNSWTRSLEPVSGHEHTE).

Belongs to the SsgA family. Interacts with SsgA. Interacts with FtsZ (via N-terminus).

The protein resides in the cell septum. Involved in sporulation-specific cell division. Required for early stages of sporulation. Important in the process of growth cessation prior to sporulation-specific cell division. Recruits cell division protein FtsZ to the future septum sites and tethers the contractile ring structure (Z ring) to the cytoplasmic membrane during sporulation. Stimulates polymerization and filament length of FtsZ in vitro. The protein is Sporulation-specific cell division protein SsgB of Kineococcus radiotolerans (strain ATCC BAA-149 / DSM 14245 / SRS30216).